The sequence spans 840 residues: Kinesin-like protein KIN-14J (840 aa).

Residues 1-74 are disordered; sequence MEADPAPSST…KGEEPVVSAE (74 aa). Residues 177-501 enclose the Kinesin motor domain; that stretch reads NIRVFCRCRP…LNFASRVRAI (325 aa). 260–267 contacts ATP; it reads GQTGTGKT. The stretch at 517-594 forms a coiled coil; that stretch reads KLKQMTEKIR…KKAARDTARS (78 aa). Positions 581–593 are enriched in basic and acidic residues; the sequence is LANEKKAARDTAR. The disordered stretch occupies residues 581–617; sequence LANEKKAARDTARSTKPPLAPMRQRPPLGRIGNHIPP.

The protein belongs to the TRAFAC class myosin-kinesin ATPase superfamily. Kinesin family. KIN-14 subfamily.

The polypeptide is Kinesin-like protein KIN-14J (Oryza sativa subsp. japonica (Rice)).